Reading from the N-terminus, the 465-residue chain is Putative apoptosis inhibitor ORF106 (465 aa).

Residues 291–357 (RECSFSTWPK…MEKETCGWLE (67 aa)) form a BIR repeat. A compositionally biased stretch (acidic residues) spans 373-382 (EGGEDKEEDG). The disordered stretch occupies residues 373-393 (EGGEDKEEDGGGGGVIEFPKN). An RING-type zinc finger spans residues 405-447 (CKACYERKADIAFIPCGHVFSCNICTMEMFASYKKKKRCPMCR).

The chain is Putative apoptosis inhibitor ORF106 from Magallana gigas (Pacific oyster).